The primary structure comprises 60 residues: Large ribosomal subunit protein uL30 (60 aa).

It belongs to the universal ribosomal protein uL30 family. As to quaternary structure, part of the 50S ribosomal subunit.

In Polaromonas naphthalenivorans (strain CJ2), this protein is Large ribosomal subunit protein uL30.